Consider the following 559-residue polypeptide: ATP synthase subunit beta-3, mitochondrial (559 aa).

Over residues methionine 1–arginine 28 the composition is skewed to low complexity. The tract at residues methionine 1–histidine 39 is disordered. The transit peptide at methionine 1–tyrosine 54 directs the protein to the mitochondrion. Phosphoserine is present on serine 62. Residue glycine 234–threonine 241 coordinates ATP.

The protein belongs to the ATPase alpha/beta chains family. As to quaternary structure, F-type ATPases have 2 components, CF(1) - the catalytic core - and CF(0) - the membrane proton channel. CF(1) has five subunits: alpha(3), beta(3), gamma(1), delta(1), epsilon(1). CF(0) has three main subunits: a, b and c.

Its subcellular location is the mitochondrion. It localises to the mitochondrion inner membrane. It carries out the reaction ATP + H2O + 4 H(+)(in) = ADP + phosphate + 5 H(+)(out). Its function is as follows. Mitochondrial membrane ATP synthase (F(1)F(0) ATP synthase or Complex V) produces ATP from ADP in the presence of a proton gradient across the membrane which is generated by electron transport complexes of the respiratory chain. F-type ATPases consist of two structural domains, F(1) - containing the extramembraneous catalytic core, and F(0) - containing the membrane proton channel, linked together by a central stalk and a peripheral stalk. During catalysis, ATP synthesis in the catalytic domain of F(1) is coupled via a rotary mechanism of the central stalk subunits to proton translocation. Subunits alpha and beta form the catalytic core in F(1). Rotation of the central stalk against the surrounding alpha(3)beta(3) subunits leads to hydrolysis of ATP in three separate catalytic sites on the beta subunits. This is ATP synthase subunit beta-3, mitochondrial from Arabidopsis thaliana (Mouse-ear cress).